Here is a 630-residue protein sequence, read N- to C-terminus: Arginine--tRNA ligase (630 aa).

Residues Ala-120 to His-130 carry the 'HIGH' region motif.

This sequence belongs to the class-I aminoacyl-tRNA synthetase family.

Its subcellular location is the cytoplasm. The catalysed reaction is tRNA(Arg) + L-arginine + ATP = L-arginyl-tRNA(Arg) + AMP + diphosphate. The protein is Arginine--tRNA ligase of Pyrobaculum arsenaticum (strain DSM 13514 / JCM 11321 / PZ6).